Here is a 563-residue protein sequence, read N- to C-terminus: PTS system fructose-specific EIIB'BC component (563 aa).

PTS EIIB type-2 domains follow at residues 1–85 (MKTL…KGHA) and 104–201 (KRVV…KAVA). C112 serves as the catalytic Phosphocysteine intermediate; for EIIB activity. Position 112 is a phosphocysteine; by EIIA (C112). Positions 226–561 (AYRHLLTGVS…KRPEVDAVAK (336 aa)) constitute a PTS EIIC type-2 domain. Transmembrane regions (helical) follow at residues 236 to 256 (YMLP…AFGI), 274 to 294 (GGSA…FSIA), 304 to 324 (IGGM…IAGF), 349 to 369 (ILII…YLIG), 382 to 402 (WLQT…GGMM), 430 to 450 (MAAI…ATMV), 463 to 483 (GKAA…PFAA), 489 to 509 (VLPC…AIGA), and 518 to 538 (LFVL…VAII).

Its subcellular location is the cell inner membrane. It catalyses the reaction D-fructose(out) + N(pros)-phospho-L-histidyl-[protein] = D-fructose 1-phosphate(in) + L-histidyl-[protein]. The phosphoenolpyruvate-dependent sugar phosphotransferase system (sugar PTS), a major carbohydrate active transport system, catalyzes the phosphorylation of incoming sugar substrates concomitantly with their translocation across the cell membrane. The enzyme II FruAB PTS system is involved in fructose transport. This is PTS system fructose-specific EIIB'BC component from Escherichia coli (strain K12).